A 204-amino-acid polypeptide reads, in one-letter code: Recombination protein RecR (204 aa).

The segment at 61 to 76 (CACCNTFSETQVCSTC) adopts a C4-type zinc-finger fold. A Toprim domain is found at 84–183 (SLLCIVETPA…KVTRIARGIP (100 aa)).

This sequence belongs to the RecR family.

Functionally, may play a role in DNA repair. It seems to be involved in an RecBC-independent recombinational process of DNA repair. It may act with RecF and RecO. The protein is Recombination protein RecR of Polynucleobacter necessarius subsp. necessarius (strain STIR1).